We begin with the raw amino-acid sequence, 116 residues long: Large ribosomal subunit protein bL19 (116 aa).

This sequence belongs to the bacterial ribosomal protein bL19 family.

In terms of biological role, this protein is located at the 30S-50S ribosomal subunit interface and may play a role in the structure and function of the aminoacyl-tRNA binding site. In Clostridium beijerinckii (strain ATCC 51743 / NCIMB 8052) (Clostridium acetobutylicum), this protein is Large ribosomal subunit protein bL19.